The following is a 214-amino-acid chain: Large ribosomal subunit protein uL6m (214 aa).

Residues 1–16 constitute a mitochondrion transit peptide; the sequence is MSFIQRRLLSQTLFLR.

Belongs to the universal ribosomal protein uL6 family. In terms of assembly, component of the mitochondrial large ribosomal subunit (mt-LSU). Mature yeast 74S mitochondrial ribosomes consist of a small (37S) and a large (54S) subunit. The 37S small subunit contains a 15S ribosomal RNA (15S mt-rRNA) and 34 different proteins. The 54S large subunit contains a 21S rRNA (21S mt-rRNA) and 46 different proteins.

It is found in the mitochondrion. In terms of biological role, component of the mitochondrial ribosome (mitoribosome), a dedicated translation machinery responsible for the synthesis of mitochondrial genome-encoded proteins, including at least some of the essential transmembrane subunits of the mitochondrial respiratory chain. The mitoribosomes are attached to the mitochondrial inner membrane and translation products are cotranslationally integrated into the membrane. This is Large ribosomal subunit protein uL6m (MRPL6) from Saccharomyces cerevisiae (strain ATCC 204508 / S288c) (Baker's yeast).